Here is a 101-residue protein sequence, read N- to C-terminus: DET1- and DDB1-associated protein 1 (101 aa).

The tract at residues 67–101 (NAAKKRDQDQLEIGETSAPPRKIARTDSQEMNEDT) is disordered.

This sequence belongs to the DDA1 family. As to quaternary structure, component of numerous DCX (DDB1-CUL4-X-box) E3 ubiquitin-protein ligase complexes which consist of a core of DDB1, cullin-4 (CUL4A or CUL4B), DDA1 and RBX1.

It functions in the pathway protein modification; protein ubiquitination. Its function is as follows. Functions as a component of numerous distinct DCX (DDB1-CUL4-X-box) E3 ubiquitin-protein ligase complexes which mediate the ubiquitination and subsequent proteasomal degradation of target proteins. In the DCX complexes, acts as a scaffolding subunit required to stabilize the complex. In Xenopus laevis (African clawed frog), this protein is DET1- and DDB1-associated protein 1.